The chain runs to 342 residues: DNA primase small subunit PriS (342 aa).

Residues D97, D99, and D276 contribute to the active site.

The protein belongs to the eukaryotic-type primase small subunit family. As to quaternary structure, heterodimer of a small subunit (PriS) and a large subunit (PriL). Mg(2+) serves as cofactor. The cofactor is Mn(2+).

Catalytic subunit of DNA primase, an RNA polymerase that catalyzes the synthesis of short RNA molecules used as primers for DNA polymerase during DNA replication. The small subunit contains the primase catalytic core and has DNA synthesis activity on its own. Binding to the large subunit stabilizes and modulates the activity, increasing the rate of DNA synthesis while decreasing the length of the DNA fragments, and conferring RNA synthesis capability. The DNA polymerase activity may enable DNA primase to also catalyze primer extension after primer synthesis. May also play a role in DNA repair. This is DNA primase small subunit PriS from Thermococcus sibiricus (strain DSM 12597 / MM 739).